Consider the following 357-residue polypeptide: 4-hydroxy-3-methylbut-2-en-1-yl diphosphate synthase (flavodoxin) (357 aa).

Positions 264, 267, 299, and 306 each coordinate [4Fe-4S] cluster.

This sequence belongs to the IspG family. It depends on [4Fe-4S] cluster as a cofactor.

It carries out the reaction (2E)-4-hydroxy-3-methylbut-2-enyl diphosphate + oxidized [flavodoxin] + H2O + 2 H(+) = 2-C-methyl-D-erythritol 2,4-cyclic diphosphate + reduced [flavodoxin]. The protein operates within isoprenoid biosynthesis; isopentenyl diphosphate biosynthesis via DXP pathway; isopentenyl diphosphate from 1-deoxy-D-xylulose 5-phosphate: step 5/6. Functionally, converts 2C-methyl-D-erythritol 2,4-cyclodiphosphate (ME-2,4cPP) into 1-hydroxy-2-methyl-2-(E)-butenyl 4-diphosphate. The chain is 4-hydroxy-3-methylbut-2-en-1-yl diphosphate synthase (flavodoxin) from Campylobacter jejuni subsp. jejuni serotype O:23/36 (strain 81-176).